The chain runs to 783 residues: Polyribonucleotide nucleotidyltransferase 1, mitochondrial (783 aa).

The transit peptide at 1 to 45 directs the protein to the mitochondrion; that stretch reads MAACRLCCLCPCLRPLGCGPLGRPGRNRALSYLQMRALWSSTGSR. 3 positions are modified to N6-acetyllysine: Lys-250, Lys-264, and Lys-285. Lys-552 carries the post-translational modification N6-succinyllysine. One can recognise a KH domain in the interval 605 to 664; it reads PVVETVKVPLSKRAKFVGPGGYHLKKLQAETGVTISQVDEETFSIFAPTPTAMHEARDFI. In terms of domain architecture, S1 motif spans 679–750; it reads GAVYTATITE…ADGRMRLSRK (72 aa). A Phosphoserine modification is found at Ser-754.

It belongs to the polyribonucleotide nucleotidyltransferase family. In terms of assembly, homotrimer; in free form. Homooligomer. Component of the mitochondrial degradosome (mtEXO) complex which is a heteropentamer containing 2 copies of SUPV3L1 and 3 copies of PNPT1. As part of the mitochondrial degradosome complex, interacts with GRSF1 in an RNA-dependent manner; the interaction enhances the activity of the complex. Interacts with TCL1A; the interaction has no effect on PNPT1 exonuclease activity.

The protein localises to the cytoplasm. The protein resides in the mitochondrion matrix. It localises to the mitochondrion intermembrane space. It carries out the reaction RNA(n+1) + phosphate = RNA(n) + a ribonucleoside 5'-diphosphate. Functionally, RNA-binding protein implicated in numerous RNA metabolic processes. Catalyzes the phosphorolysis of single-stranded polyribonucleotides processively in the 3'-to-5' direction. Mitochondrial intermembrane factor with RNA-processing exoribonulease activity. Component of the mitochondrial degradosome (mtEXO) complex, that degrades 3' overhang double-stranded RNA with a 3'-to-5' directionality in an ATP-dependent manner. Involved in the degradation of non-coding mitochondrial transcripts (MT-ncRNA) and tRNA-like molecules. Required for correct processing and polyadenylation of mitochondrial mRNAs. Plays a role as a cytoplasmic RNA import factor that mediates the translocation of small RNA components, like the 5S RNA, the RNA subunit of ribonuclease P and the mitochondrial RNA-processing (MRP) RNA, into the mitochondrial matrix. Plays a role in mitochondrial morphogenesis and respiration; regulates the expression of the electron transport chain (ETC) components at the mRNA and protein levels. In the cytoplasm, shows a 3'-to-5' exoribonuclease mediating mRNA degradation activity; degrades c-myc mRNA upon treatment with IFNB1/IFN-beta, resulting in a growth arrest in melanoma cells. Regulates the stability of specific mature miRNAs in melanoma cells; specifically and selectively degrades miR-221, preferentially. Also plays a role in RNA cell surveillance by cleaning up oxidized RNAs. Binds to the RNA subunit of ribonuclease P, MRP RNA and miR-221 microRNA. The sequence is that of Polyribonucleotide nucleotidyltransferase 1, mitochondrial (Pnpt1) from Mus musculus (Mouse).